A 555-amino-acid chain; its full sequence is Potassium-transporting ATPase potassium-binding subunit (555 aa).

10 helical membrane passes run 2–22 (IWVA…PTGI), 60–80 (QYAL…YFIF), 130–150 (IGIT…VMAF), 173–193 (VFLP…VPQT), 246–266 (MSNI…PFTY), 278–298 (ILFV…TTSE), 374–394 (AGFV…GLMV), 412–432 (LIAV…ALAL), 483–503 (LVMF…AASL), and 525–545 (GIFI…MLVL).

It belongs to the KdpA family. As to quaternary structure, the system is composed of three essential subunits: KdpA, KdpB and KdpC.

Its subcellular location is the cell membrane. Functionally, part of the high-affinity ATP-driven potassium transport (or Kdp) system, which catalyzes the hydrolysis of ATP coupled with the electrogenic transport of potassium into the cytoplasm. This subunit binds the extracellular potassium ions and delivers the ions to the membrane domain of KdpB through an intramembrane tunnel. The protein is Potassium-transporting ATPase potassium-binding subunit of Bacillus cereus (strain Q1).